The primary structure comprises 252 residues: Small ribosomal subunit protein uS3 (252 aa).

The 73-residue stretch at 39-111 (IRKLINNFAK…DVNLNVLEVK (73 aa)) folds into the KH type-2 domain. The disordered stretch occupies residues 226–252 (SQSSNNPNRRPRNFKGGNNNHVNAKKN).

The protein belongs to the universal ribosomal protein uS3 family. Part of the 30S ribosomal subunit. Forms a tight complex with proteins S10 and S14.

In terms of biological role, binds the lower part of the 30S subunit head. Binds mRNA in the 70S ribosome, positioning it for translation. In Aster yellows witches'-broom phytoplasma (strain AYWB), this protein is Small ribosomal subunit protein uS3.